The following is a 519-amino-acid chain: T-box transcription factor TBX5 (519 aa).

Residues 1 to 43 (MADTEEAYGMPDTPVEAEPKELQCEPKQDNQMGASSKTPTSPQ) form a disordered region. Over residues 17–28 (AEPKELQCEPKQ) the composition is skewed to basic and acidic residues. Polar residues predominate over residues 29-43 (DNQMGASSKTPTSPQ). The T-box DNA-binding region spans 63 to 238 (LWLKFHEVGT…NNPFAKGFRG (176 aa)). 2 disordered regions span residues 254–312 (EYPV…SAYP) and 335–376 (ELSY…TESA). Residues 262–303 (TVRQKVSSNHSPFSQETRNITGSSTLNSQYQCENGVSSTSQD) show a composition bias toward polar residues.

In terms of assembly, monomer. Homodimer (via the T-box); binds DNA as homodimer.

It localises to the nucleus. It is found in the cytoplasm. DNA-binding protein that regulates the transcription of several genes and is involved in heart development and limb pattern formation. May bind to the core DNA motif of promoters. This Xenopus tropicalis (Western clawed frog) protein is T-box transcription factor TBX5 (tbx5).